A 410-amino-acid polypeptide reads, in one-letter code: Lipoyl synthase, mitochondrial (410 aa).

The transit peptide at 1-29 directs the protein to the mitochondrion; it reads MASTTVCSAARIRVASSQVLRSIANTRTY. Residues 29 to 39 are compositionally biased toward polar residues; the sequence is YATTSPESSIP. The segment at 29–49 is disordered; that stretch reads YATTSPESSIPETKPTAKRTP. The [4Fe-4S] cluster site is built by cysteine 129, cysteine 134, cysteine 140, cysteine 160, cysteine 164, cysteine 167, and serine 375. A Radical SAM core domain is found at 143–364; it reads GGSKAAATAT…KEKAMEMGFL (222 aa).

Belongs to the radical SAM superfamily. Lipoyl synthase family. The cofactor is [4Fe-4S] cluster.

The protein localises to the mitochondrion. It carries out the reaction [[Fe-S] cluster scaffold protein carrying a second [4Fe-4S](2+) cluster] + N(6)-octanoyl-L-lysyl-[protein] + 2 oxidized [2Fe-2S]-[ferredoxin] + 2 S-adenosyl-L-methionine + 4 H(+) = [[Fe-S] cluster scaffold protein] + N(6)-[(R)-dihydrolipoyl]-L-lysyl-[protein] + 4 Fe(3+) + 2 hydrogen sulfide + 2 5'-deoxyadenosine + 2 L-methionine + 2 reduced [2Fe-2S]-[ferredoxin]. It functions in the pathway protein modification; protein lipoylation via endogenous pathway; protein N(6)-(lipoyl)lysine from octanoyl-[acyl-carrier-protein]: step 2/2. Catalyzes the radical-mediated insertion of two sulfur atoms into the C-6 and C-8 positions of the octanoyl moiety bound to the lipoyl domains of lipoate-dependent enzymes, thereby converting the octanoylated domains into lipoylated derivatives. The polypeptide is Lipoyl synthase, mitochondrial (Arthroderma otae (strain ATCC MYA-4605 / CBS 113480) (Microsporum canis)).